The chain runs to 141 residues: Large ribosomal subunit protein uL11 (141 aa).

The protein belongs to the universal ribosomal protein uL11 family. Part of the ribosomal stalk of the 50S ribosomal subunit. Interacts with L10 and the large rRNA to form the base of the stalk. L10 forms an elongated spine to which L12 dimers bind in a sequential fashion forming a multimeric L10(L12)X complex. In terms of processing, one or more lysine residues are methylated.

Functionally, forms part of the ribosomal stalk which helps the ribosome interact with GTP-bound translation factors. The sequence is that of Large ribosomal subunit protein uL11 from Parasynechococcus marenigrum (strain WH8102).